The primary structure comprises 156 residues: Small ribosomal subunit protein uS7 (156 aa).

The protein belongs to the universal ribosomal protein uS7 family. As to quaternary structure, part of the 30S ribosomal subunit. Contacts proteins S9 and S11.

In terms of biological role, one of the primary rRNA binding proteins, it binds directly to 16S rRNA where it nucleates assembly of the head domain of the 30S subunit. Is located at the subunit interface close to the decoding center, probably blocks exit of the E-site tRNA. This Synechococcus sp. (strain JA-3-3Ab) (Cyanobacteria bacterium Yellowstone A-Prime) protein is Small ribosomal subunit protein uS7.